The sequence spans 2771 residues: Teneurin-4 (2771 aa).

Residues 1-22 (MDVKERKPYRSLTRRRDAERRY) are compositionally biased toward basic and acidic residues. The tract at residues 1–45 (MDVKERKPYRSLTRRRDAERRYTSSSADSEEGKGPQKSYSSSETL) is disordered. Residues 1–341 (MDVKERKPYR…KPSKYCNWKC (341 aa)) enclose the Teneurin N-terminal domain. Topologically, residues 1–345 (MDVKERKPYR…YCNWKCAALS (345 aa)) are cytoplasmic. S124 is subject to Phosphoserine. The interval 132–233 (WGRSTRSGRS…PPAGSAQEPT (102 aa)) is disordered. The span at 134–155 (RSTRSGRSSCLSSRANSNLTLT) shows a compositional bias: low complexity. Residues 156–166 (DTEHENTETDH) are compositionally biased toward basic and acidic residues. T178 is modified (phosphothreonine). Over residues 191 to 211 (QHHAASINSLNRGNFTPRSNP) the composition is skewed to polar residues. Residues 346-366 (AILISATLVILLAYFVAMHLF) form a helical membrane-spanning segment. The Extracellular segment spans residues 367-2771 (GLNWHLQPME…FMRQSEMGRR (2405 aa)). Positions 403-428 (SGGTGLETPDRKGKGAAEGKPSSLFP) are disordered. The segment covering 410–419 (TPDRKGKGAA) has biased composition (basic and acidic residues). N469 is a glycosylation site (N-linked (GlcNAc...) asparagine). The interval 509–528 (ARSLEGPQRQSRGPVPPSSH) is disordered. 8 EGF-like domains span residues 564–595 (SVDNCPSNCYGNGDCISGTCHCFLGFLGPDCG), 596–626 (RASCPVLCSGNGQYMKGRCLCHSGWKGAECD), 628–660 (PTNQCIDVACSSHGTCIMGTCICNPGYKGESCE), 661–692 (EVDCMDPTCSSRGVCVRGECHCSVGWGGTNCE), 694–727 (PRATCLDQCSGHGTFLPDTGLCNCDPSWTGHDCS), 728–759 (IEICAADCGGHGVCVGGTCRCEDGWMGAACDQ), 760–789 (RACHPRCAEHGTCRDGKCECSPGWNGEHCT), and 790–833 (IAHY…TGCD). 22 cysteine pairs are disulfide-bonded: C568–C578, C572–C583, C585–C594, C603–C614, C616–C625, C632–C643, C637–C648, C650–C659, C664–C675, C669–C680, C682–C691, C702–C715, C717–C726, C731–C741, C735–C746, C748–C757, C762–C772, C766–C777, C779–C788, C802–C812, C806–C821, and C823–C832. 2 N-linked (GlcNAc...) asparagine glycosylation sites follow: N942 and N1261. NHL repeat units lie at residues 1218 to 1261 (SCPS…PSGN), 1266 to 1310 (LEMR…VKST), 1336 to 1380 (TRCG…NGII), 1395 to 1446 (LSCD…VAGR), and 1525 to 1568 (CFSG…IRKN). Residues 1578-1597 (YELSSPIDQELYLFDTSGKH) form a YD 1 repeat. A glycan (N-linked (GlcNAc...) asparagine) is linked at N1611. 3 YD repeats span residues 1614–1634 (YTGDGDITHITDNNGNMVNVR), 1677–1696 (YHGNSGLLATKSNENGWTTF), and 1697–1719 (YEYDSFGRLTNVTFPTGQVSSFR). N1707, N1743, N1801, and N1886 each carry an N-linked (GlcNAc...) asparagine glycan. 18 YD repeats span residues 1889–1908 (YSPGGHIAGIQRGIMSERME), 1930–1948 (YLEKSMVLHLHSQRQYIFE), 1949–1969 (FDKNDRLSSVTMPNVARQTLE), 1976–1993 (YYRNIYQPPEGNASVIQD), 1994–2015 (FTEDGHLLHTFYLGTGRRVIYK), 2016–2033 (YGKLSKLAETLYDTTKVS), 2036–2056 (YDETAGMLKTVNLQNEGFTCT), 2059–2079 (YRQIGPLIDRQIFRFTEEGMV), 2087–2106 (YDNSFRVTSMQAVINETPLP), 2112–2129 (YDDVSGKTEQFGKFGVIY), 2130–2156 (YDINQIITTAVMTHTKHFDAYGRMKEV), 2158–2171 (YEIFRSLMYWMTVQ), 2172–2195 (YDNMGRVVKKELKVGPYANTTRYS), 2198–2218 (YDADGQLQTVSINDKPLWRYS), 2219–2239 (YDLNGNLHLLSPGNSARLTPL), 2241–2261 (YDLRDRITRLGDVQYKMDEDG), 2273–2293 (YNSAGLLIKAYNRASGWSVRY), and 2295–2315 (YDGLGRRVSSKSSHSHHLQFF). N1987 carries N-linked (GlcNAc...) asparagine glycosylation. N2190 is a glycosylation site (N-linked (GlcNAc...) asparagine). Residue N2330 is glycosylated (N-linked (GlcNAc...) asparagine). Residues 2341-2382 (YDLQGHLFAMELSSGDEFYIACDNIGTPLAVFSGTGLMIKQI) form a YD 23 repeat. N-linked (GlcNAc...) asparagine glycosylation is present at N2648.

Belongs to the tenascin family. Teneurin subfamily. As to quaternary structure, homodimer; disulfide-linked. May also form heterodimer with either TENM1 or TENM2 or TENM3. In terms of tissue distribution, expressed in brain and spinal cord (at protein level). Expressed in neurons and oligodendrocytes of the spinal cord. Expressed weakly in kidney, lung and spleen. Expressed in the cortex, CA1, CA2 and CA3 of the hippocampus. Expressed in the white matter, Purkinje cells and molecular layer of the cerebellum.

Its subcellular location is the cell membrane. It is found in the cell projection. The protein localises to the nucleus. The protein resides in the cytoplasm. Its function is as follows. Involved in neural development, regulating the establishment of proper connectivity within the nervous system. Plays a role in the establishment of the anterior-posterior axis during gastrulation. Regulates the differentiation and cellular process formation of oligodendrocytes and myelination of small-diameter axons in the central nervous system (CNS). Promotes activation of focal adhesion kinase. May function as a cellular signal transducer. The chain is Teneurin-4 (Tenm4) from Mus musculus (Mouse).